Here is a 104-residue protein sequence, read N- to C-terminus: Meiotically up-regulated gene 150 protein (104 aa).

A run of 3 helical transmembrane segments spans residues 30-50 (FFLKNIIVLSNYLYLLYKAWI), 54-74 (TISLCCDFPLFNFLFIAIPYF), and 84-104 (LLWFLFVSLCFITLSFQSLEI).

It localises to the endoplasmic reticulum membrane. Has a role in meiosis. In Schizosaccharomyces pombe (strain 972 / ATCC 24843) (Fission yeast), this protein is Meiotically up-regulated gene 150 protein (mug150).